The chain runs to 718 residues: Exostosin-2 (718 aa).

At 1–25 the chain is on the cytoplasmic side; it reads MCASVKYNIRGPALIPRMKTKHRIY. The chain crosses the membrane as a helical; Signal-anchor for type II membrane protein span at residues 26-46; sequence YITLFSIVLLGLIATGMFQFW. Residues 47 to 718 are Lumenal-facing; it reads PHSIESSNDW…LKSFPNIGSL (672 aa). Disulfide bonds link Cys85–Cys90, Cys96–Cys151, Cys286–Cys300, and Cys318–Cys339. N-linked (GlcNAc...) asparagine glycosylation occurs at Asn288. Leu461, Arg465, Asn490, and Asn517 together coordinate UDP. UDP-N-acetyl-alpha-D-glucosamine is bound by residues Arg465, Asn490, Asn517, Arg522, Asp538, Asp539, and Asp540. The UDP site is built by Asp538 and Asp539. Asp540 contributes to the Mn(2+) binding site. 2 residues coordinate a protein: Tyr582 and Ser584. Cys626 and Cys676 are oxidised to a cystine. The UDP-N-acetyl-alpha-D-glucosamine site is built by Glu627 and Asp628. An N-linked (GlcNAc...) asparagine glycan is attached at Asn637. Lys651 and Lys653 together coordinate a protein. Arg673 provides a ligand contact to UDP-N-acetyl-alpha-D-glucosamine.

It belongs to the glycosyltransferase 47 family. Part of the heparan sulfate polymerase, a dimeric complex composed of EXT1 and EXT2. Could also form homooligomeric complexes. Interacts with NDST1. Interacts with GALNT5. The cofactor is Mn(2+). In terms of processing, N-glycosylated at Asn-637. A soluble form is generated by proteolytic processing. Widely expressed.

It localises to the golgi apparatus membrane. The protein resides in the golgi apparatus. Its subcellular location is the cis-Golgi network membrane. It is found in the endoplasmic reticulum membrane. The protein localises to the secreted. It catalyses the reaction 3-O-{[(1-&gt;4)-beta-D-GlcA-(1-&gt;4)-alpha-D-GlcNAc](n)-(1-&gt;4)-beta-D-GlcA-(1-&gt;3)-beta-D-Gal-(1-&gt;3)-beta-D-Gal-(1-&gt;4)-beta-D-Xyl}-L-seryl-[protein] + UDP-N-acetyl-alpha-D-glucosamine = 3-O-{alpha-D-GlcNAc-[(1-&gt;4)-beta-D-GlcA-(1-&gt;4)-alpha-D-GlcNAc](n)-(1-&gt;4)-beta-D-GlcA-(1-&gt;3)-beta-D-Gal-(1-&gt;3)-beta-D-Gal-(1-&gt;4)-beta-D-Xyl}-L-seryl-[protein] + UDP + H(+). It participates in protein modification; protein glycosylation. Its function is as follows. Glycosyltransferase forming with EXT1 the heterodimeric heparan sulfate polymerase which catalyzes the elongation of the heparan sulfate glycan backbone. Glycan backbone extension consists in the alternating transfer of (1-&gt;4)-beta-D-GlcA and (1-&gt;4)-alpha-D-GlcNAc residues from their respective UDP-sugar donors. Both EXT1 and EXT2 are required for the full activity of the polymerase since EXT1 bears the N-acetylglucosaminyl-proteoglycan 4-beta-glucuronosyltransferase activity within the complex while EXT2 carries the glucuronosyl-N-acetylglucosaminyl-proteoglycan 4-alpha-N-acetylglucosaminyltransferase activity. Heparan sulfate proteoglycans are ubiquitous components of the extracellular matrix and play an important role in tissue homeostasis and signaling. This chain is Exostosin-2, found in Homo sapiens (Human).